The chain runs to 323 residues: o-succinylbenzoate synthase (323 aa).

The active-site Proton donor is lysine 134. Mg(2+) is bound by residues aspartate 162, glutamate 191, and aspartate 214. The active-site Proton acceptor is the lysine 236.

Belongs to the mandelate racemase/muconate lactonizing enzyme family. MenC type 1 subfamily. It depends on a divalent metal cation as a cofactor.

The catalysed reaction is (1R,6R)-6-hydroxy-2-succinyl-cyclohexa-2,4-diene-1-carboxylate = 2-succinylbenzoate + H2O. It participates in quinol/quinone metabolism; 1,4-dihydroxy-2-naphthoate biosynthesis; 1,4-dihydroxy-2-naphthoate from chorismate: step 4/7. It functions in the pathway quinol/quinone metabolism; menaquinone biosynthesis. Converts 2-succinyl-6-hydroxy-2,4-cyclohexadiene-1-carboxylate (SHCHC) to 2-succinylbenzoate (OSB). In Yersinia pseudotuberculosis serotype O:3 (strain YPIII), this protein is o-succinylbenzoate synthase.